The sequence spans 192 residues: Orotate phosphoribosyltransferase (192 aa).

116–124 (EDIVTTGLS) provides a ligand contact to 5-phospho-alpha-D-ribose 1-diphosphate. Orotate-binding residues include Thr120 and Arg148.

This sequence belongs to the purine/pyrimidine phosphoribosyltransferase family. PyrE subfamily. In terms of assembly, homodimer. It depends on Mg(2+) as a cofactor.

It carries out the reaction orotidine 5'-phosphate + diphosphate = orotate + 5-phospho-alpha-D-ribose 1-diphosphate. It functions in the pathway pyrimidine metabolism; UMP biosynthesis via de novo pathway; UMP from orotate: step 1/2. Catalyzes the transfer of a ribosyl phosphate group from 5-phosphoribose 1-diphosphate to orotate, leading to the formation of orotidine monophosphate (OMP). The protein is Orotate phosphoribosyltransferase of Bartonella henselae (strain ATCC 49882 / DSM 28221 / CCUG 30454 / Houston 1) (Rochalimaea henselae).